The primary structure comprises 550 residues: CTP synthase (550 aa).

Residues 1–270 (MTKFVFVTGG…DRLICEELRL (270 aa)) are amidoligase domain. Residue Ser-13 participates in CTP binding. Ser-13 provides a ligand contact to UTP. ATP is bound by residues 14 to 19 (SLGKGI) and Asp-71. Residues Asp-71 and Glu-144 each coordinate Mg(2+). CTP-binding positions include 151–153 (DIE), 191–196 (KTKPTQ), and Lys-227. UTP is bound by residues 191 to 196 (KTKPTQ) and Lys-227. Residues 295 to 547 (TIGMVGKYVD…VEAALASQQR (253 aa)) form the Glutamine amidotransferase type-1 domain. Gly-356 lines the L-glutamine pocket. Cys-383 functions as the Nucleophile; for glutamine hydrolysis in the catalytic mechanism. L-glutamine is bound by residues 384–387 (LGMQ), Glu-407, and Arg-473. Catalysis depends on residues His-520 and Glu-522.

Belongs to the CTP synthase family. In terms of assembly, homotetramer.

It carries out the reaction UTP + L-glutamine + ATP + H2O = CTP + L-glutamate + ADP + phosphate + 2 H(+). The enzyme catalyses L-glutamine + H2O = L-glutamate + NH4(+). The catalysed reaction is UTP + NH4(+) + ATP = CTP + ADP + phosphate + 2 H(+). Its pathway is pyrimidine metabolism; CTP biosynthesis via de novo pathway; CTP from UDP: step 2/2. Its activity is regulated as follows. Allosterically activated by GTP, when glutamine is the substrate; GTP has no effect on the reaction when ammonia is the substrate. The allosteric effector GTP functions by stabilizing the protein conformation that binds the tetrahedral intermediate(s) formed during glutamine hydrolysis. Inhibited by the product CTP, via allosteric rather than competitive inhibition. Its function is as follows. Catalyzes the ATP-dependent amination of UTP to CTP with either L-glutamine or ammonia as the source of nitrogen. Regulates intracellular CTP levels through interactions with the four ribonucleotide triphosphates. This Cupriavidus necator (strain ATCC 17699 / DSM 428 / KCTC 22496 / NCIMB 10442 / H16 / Stanier 337) (Ralstonia eutropha) protein is CTP synthase.